We begin with the raw amino-acid sequence, 223 residues long: Large ribosomal subunit protein uL3 (223 aa).

It belongs to the universal ribosomal protein uL3 family. Part of the 50S ribosomal subunit. Forms a cluster with proteins L14 and L19.

One of the primary rRNA binding proteins, it binds directly near the 3'-end of the 23S rRNA, where it nucleates assembly of the 50S subunit. The sequence is that of Large ribosomal subunit protein uL3 from Mycoplasma capricolum subsp. capricolum (strain California kid / ATCC 27343 / NCTC 10154).